Consider the following 126-residue polypeptide: Fluoride-specific ion channel FluC (126 aa).

4 helical membrane-spanning segments follow: residues 3–23 (LSIL…WFLG), 35–55 (LGTL…VAYF), 68–88 (FIIT…AEVV), and 103–123 (IAIH…TVAV). Na(+)-binding residues include G75 and S78.

The protein belongs to the fluoride channel Fluc/FEX (TC 1.A.43) family.

It localises to the cell inner membrane. The catalysed reaction is fluoride(in) = fluoride(out). Its activity is regulated as follows. Na(+) is not transported, but it plays an essential structural role and its presence is essential for fluoride channel function. Functionally, fluoride-specific ion channel. Important for reducing fluoride concentration in the cell, thus reducing its toxicity. The polypeptide is Fluoride-specific ion channel FluC (Paraburkholderia phymatum (strain DSM 17167 / CIP 108236 / LMG 21445 / STM815) (Burkholderia phymatum)).